Reading from the N-terminus, the 225-residue chain is RNA chaperone ProQ (225 aa).

Positions 103-173 (LEEAKARVQT…APREERHTPV (71 aa)) are disordered. Low complexity predominate over residues 109–118 (RVQTQRAAQQ). Basic residues predominate over residues 137-146 (RERKPRPQQP). The span at 147-156 (RRKEGAEQRK) shows a compositional bias: basic and acidic residues.

This sequence belongs to the ProQ family.

It localises to the cytoplasm. In terms of biological role, RNA chaperone with significant RNA binding, RNA strand exchange and RNA duplexing activities. May regulate ProP activity through an RNA-based, post-transcriptional mechanism. The sequence is that of RNA chaperone ProQ from Klebsiella pneumoniae (strain 342).